The following is a 347-amino-acid chain: NADH-ubiquinone oxidoreductase chain 2 (347 aa).

10 consecutive transmembrane segments (helical) span residues 13–33, 56–76, 96–116, 123–143, 149–169, 178–198, 201–221, 247–267, 274–294, and 326–346; these read IFAG…WVGL, AIKY…AILF, LMIM…FWVP, PLTS…SIMY, LNVS…SWGG, ILAY…PYNP, TILN…LLNL, TLLS…WAII, NSLI…YFYL, and LPTL…MLMI.

Belongs to the complex I subunit 2 family. In terms of assembly, core subunit of respiratory chain NADH dehydrogenase (Complex I) which is composed of 45 different subunits. Interacts with TMEM242.

Its subcellular location is the mitochondrion inner membrane. The catalysed reaction is a ubiquinone + NADH + 5 H(+)(in) = a ubiquinol + NAD(+) + 4 H(+)(out). Its function is as follows. Core subunit of the mitochondrial membrane respiratory chain NADH dehydrogenase (Complex I) which catalyzes electron transfer from NADH through the respiratory chain, using ubiquinone as an electron acceptor. Essential for the catalytic activity and assembly of complex I. This is NADH-ubiquinone oxidoreductase chain 2 from Homo sapiens (Human).